The primary structure comprises 168 residues: Bifunctional protein PyrR (168 aa).

The short motif at 90 to 102 is the PRPP-binding element; it reads LVLIDDVLMSGRT.

Belongs to the purine/pyrimidine phosphoribosyltransferase family. PyrR subfamily.

The catalysed reaction is UMP + diphosphate = 5-phospho-alpha-D-ribose 1-diphosphate + uracil. Regulates the transcription of the pyrimidine nucleotide (pyr) operon in response to exogenous pyrimidines. Functionally, also displays a weak uracil phosphoribosyltransferase activity which is not physiologically significant. The protein is Bifunctional protein PyrR of Pseudomonas fluorescens (strain ATCC BAA-477 / NRRL B-23932 / Pf-5).